A 294-amino-acid polypeptide reads, in one-letter code: GTPase Era (294 aa).

Residues 3-170 enclose the Era-type G domain; the sequence is KSGFISIIGR…LELMIKYMPE (168 aa). The G1 stretch occupies residues 11–18; sequence GRPNVGKS. 11 to 18 provides a ligand contact to GTP; it reads GRPNVGKS. Residues 37-41 form a G2 region; it reads QTTRN. The tract at residues 58–61 is G3; that stretch reads DTPG. GTP contacts are provided by residues 58-62 and 120-123; these read DTPGI and NKID. Residues 120-123 are G4; that stretch reads NKID. The interval 149-151 is G5; it reads ISA. In terms of domain architecture, KH type-2 spans 201-278; the sequence is LSEEVPHGIA…NLKVWVKVKK (78 aa).

The protein belongs to the TRAFAC class TrmE-Era-EngA-EngB-Septin-like GTPase superfamily. Era GTPase family. As to quaternary structure, monomer.

It localises to the cytoplasm. Its subcellular location is the cell membrane. Its function is as follows. An essential GTPase that binds both GDP and GTP, with rapid nucleotide exchange. Plays a role in 16S rRNA processing and 30S ribosomal subunit biogenesis and possibly also in cell cycle regulation and energy metabolism. This Clostridium novyi (strain NT) protein is GTPase Era.